A 121-amino-acid polypeptide reads, in one-letter code: Fluoride-specific ion channel FluC 1 (121 aa).

4 helical membrane passes run 3–23 (YVYI…ISFL), 35–55 (IANL…IAFF), 64–84 (AITT…LELI), and 92–112 (FITL…LCYV). Residues glycine 71 and threonine 74 each contribute to the Na(+) site.

This sequence belongs to the fluoride channel Fluc/FEX (TC 1.A.43) family.

It is found in the cell membrane. It carries out the reaction fluoride(in) = fluoride(out). With respect to regulation, na(+) is not transported, but it plays an essential structural role and its presence is essential for fluoride channel function. Functionally, fluoride-specific ion channel. Important for reducing fluoride concentration in the cell, thus reducing its toxicity. The sequence is that of Fluoride-specific ion channel FluC 1 from Staphylococcus aureus (strain NCTC 8325 / PS 47).